The following is a 1213-amino-acid chain: DNA-directed RNA polymerase subunit beta' (1213 aa).

Residues Cys-60, Cys-62, Cys-75, and Cys-78 each contribute to the Zn(2+) site. Positions 450, 452, and 454 each coordinate Mg(2+). 4 residues coordinate Zn(2+): Cys-819, Cys-893, Cys-900, and Cys-903.

It belongs to the RNA polymerase beta' chain family. As to quaternary structure, the RNAP catalytic core consists of 2 alpha, 1 beta, 1 beta' and 1 omega subunit. When a sigma factor is associated with the core the holoenzyme is formed, which can initiate transcription. The cofactor is Mg(2+). It depends on Zn(2+) as a cofactor.

The enzyme catalyses RNA(n) + a ribonucleoside 5'-triphosphate = RNA(n+1) + diphosphate. Its function is as follows. DNA-dependent RNA polymerase catalyzes the transcription of DNA into RNA using the four ribonucleoside triphosphates as substrates. The polypeptide is DNA-directed RNA polymerase subunit beta' (Streptococcus pyogenes serotype M28 (strain MGAS6180)).